We begin with the raw amino-acid sequence, 120 residues long: Large ribosomal subunit protein uL18 (120 aa).

The protein belongs to the universal ribosomal protein uL18 family. In terms of assembly, part of the 50S ribosomal subunit; part of the 5S rRNA/L5/L18/L25 subcomplex. Contacts the 5S and 23S rRNAs.

In terms of biological role, this is one of the proteins that bind and probably mediate the attachment of the 5S RNA into the large ribosomal subunit, where it forms part of the central protuberance. The sequence is that of Large ribosomal subunit protein uL18 from Methylorubrum extorquens (strain CM4 / NCIMB 13688) (Methylobacterium extorquens).